The sequence spans 611 residues: UvrABC system protein C (611 aa).

In terms of domain architecture, GIY-YIG spans 19–97 (QRPGVYRMVD…IKELRPRYNV (79 aa)). Residues 207–242 (NQVIEELGARMEAASERLEFEAAAQYRDRIQALQAV) enclose the UVR domain.

The protein belongs to the UvrC family. In terms of assembly, interacts with UvrB in an incision complex.

The protein resides in the cytoplasm. Functionally, the UvrABC repair system catalyzes the recognition and processing of DNA lesions. UvrC both incises the 5' and 3' sides of the lesion. The N-terminal half is responsible for the 3' incision and the C-terminal half is responsible for the 5' incision. The sequence is that of UvrABC system protein C from Alkalilimnicola ehrlichii (strain ATCC BAA-1101 / DSM 17681 / MLHE-1).